The primary structure comprises 390 residues: Succinyl-diaminopimelate desuccinylase (390 aa).

Residue histidine 74 coordinates Zn(2+). The active site involves aspartate 76. Aspartate 107 provides a ligand contact to Zn(2+). The active-site Proton acceptor is glutamate 140. Zn(2+) is bound by residues glutamate 141, glutamate 169, and histidine 363.

This sequence belongs to the peptidase M20A family. DapE subfamily. Homodimer. Zn(2+) is required as a cofactor. The cofactor is Co(2+).

It catalyses the reaction N-succinyl-(2S,6S)-2,6-diaminopimelate + H2O = (2S,6S)-2,6-diaminopimelate + succinate. The protein operates within amino-acid biosynthesis; L-lysine biosynthesis via DAP pathway; LL-2,6-diaminopimelate from (S)-tetrahydrodipicolinate (succinylase route): step 3/3. Catalyzes the hydrolysis of N-succinyl-L,L-diaminopimelic acid (SDAP), forming succinate and LL-2,6-diaminopimelate (DAP), an intermediate involved in the bacterial biosynthesis of lysine and meso-diaminopimelic acid, an essential component of bacterial cell walls. This is Succinyl-diaminopimelate desuccinylase from Bartonella quintana (strain Toulouse) (Rochalimaea quintana).